Reading from the N-terminus, the 353-residue chain is Photosystem II protein D1 (353 aa).

T2 carries the post-translational modification N-acetylthreonine. At T2 the chain carries Phosphothreonine. The next 3 helical transmembrane spans lie at 29–46 (YIGWFGVLMIPTLLTATS), 118–133 (HFLLGVACYMGREWEL), and 142–156 (WIAVAYSAPVAAATA). H118 contacts chlorophyll a. Pheophytin a is bound at residue Y126. 2 residues coordinate [CaMn4O5] cluster: D170 and E189. A helical membrane pass occupies residues 197-218 (FHMLGVAGVFGGSLFSAMHGSL). Residue H198 participates in chlorophyll a binding. Residues H215 and 264–265 (SF) contribute to the a quinone site. H215 contacts Fe cation. H272 contacts Fe cation. Residues 274 to 288 (FLAAWPVVGIWFTAL) form a helical membrane-spanning segment. H332, E333, D342, and A344 together coordinate [CaMn4O5] cluster. The propeptide occupies 345-353 (AVEAPAVNG).

The protein belongs to the reaction center PufL/M/PsbA/D family. As to quaternary structure, PSII is composed of 1 copy each of membrane proteins PsbA, PsbB, PsbC, PsbD, PsbE, PsbF, PsbH, PsbI, PsbJ, PsbK, PsbL, PsbM, PsbT, PsbX, PsbY, PsbZ, Psb30/Ycf12, at least 3 peripheral proteins of the oxygen-evolving complex and a large number of cofactors. It forms dimeric complexes. The cofactor is The D1/D2 heterodimer binds P680, chlorophylls that are the primary electron donor of PSII, and subsequent electron acceptors. It shares a non-heme iron and each subunit binds pheophytin, quinone, additional chlorophylls, carotenoids and lipids. D1 provides most of the ligands for the Mn4-Ca-O5 cluster of the oxygen-evolving complex (OEC). There is also a Cl(-1) ion associated with D1 and D2, which is required for oxygen evolution. The PSII complex binds additional chlorophylls, carotenoids and specific lipids.. In terms of processing, tyr-161 forms a radical intermediate that is referred to as redox-active TyrZ, YZ or Y-Z. Post-translationally, C-terminally processed by CTPA; processing is essential to allow assembly of the oxygen-evolving complex and thus photosynthetic growth.

It is found in the plastid. The protein resides in the chloroplast thylakoid membrane. The enzyme catalyses 2 a plastoquinone + 4 hnu + 2 H2O = 2 a plastoquinol + O2. Photosystem II (PSII) is a light-driven water:plastoquinone oxidoreductase that uses light energy to abstract electrons from H(2)O, generating O(2) and a proton gradient subsequently used for ATP formation. It consists of a core antenna complex that captures photons, and an electron transfer chain that converts photonic excitation into a charge separation. The D1/D2 (PsbA/PsbD) reaction center heterodimer binds P680, the primary electron donor of PSII as well as several subsequent electron acceptors. This chain is Photosystem II protein D1, found in Marchantia polymorpha (Common liverwort).